The sequence spans 490 residues: Aspartyl/glutamyl-tRNA(Asn/Gln) amidotransferase subunit B (490 aa).

The protein belongs to the GatB/GatE family. GatB subfamily. In terms of assembly, heterotrimer of A, B and C subunits.

The catalysed reaction is L-glutamyl-tRNA(Gln) + L-glutamine + ATP + H2O = L-glutaminyl-tRNA(Gln) + L-glutamate + ADP + phosphate + H(+). It carries out the reaction L-aspartyl-tRNA(Asn) + L-glutamine + ATP + H2O = L-asparaginyl-tRNA(Asn) + L-glutamate + ADP + phosphate + 2 H(+). Its function is as follows. Allows the formation of correctly charged Asn-tRNA(Asn) or Gln-tRNA(Gln) through the transamidation of misacylated Asp-tRNA(Asn) or Glu-tRNA(Gln) in organisms which lack either or both of asparaginyl-tRNA or glutaminyl-tRNA synthetases. The reaction takes place in the presence of glutamine and ATP through an activated phospho-Asp-tRNA(Asn) or phospho-Glu-tRNA(Gln). The chain is Aspartyl/glutamyl-tRNA(Asn/Gln) amidotransferase subunit B from Prochlorococcus marinus (strain MIT 9312).